The primary structure comprises 157 residues: Phosphopantetheine adenylyltransferase (157 aa).

Residue Ser-8 coordinates substrate. ATP-binding positions include 8-9 and His-16; that span reads SF. Positions 40, 72, and 86 each coordinate substrate. ATP is bound by residues 87 to 89, Glu-97, and 122 to 128; these read GLR and FSFLSSS.

Belongs to the bacterial CoaD family. As to quaternary structure, homohexamer. It depends on Mg(2+) as a cofactor.

It is found in the cytoplasm. It catalyses the reaction (R)-4'-phosphopantetheine + ATP + H(+) = 3'-dephospho-CoA + diphosphate. The protein operates within cofactor biosynthesis; coenzyme A biosynthesis; CoA from (R)-pantothenate: step 4/5. Functionally, reversibly transfers an adenylyl group from ATP to 4'-phosphopantetheine, yielding dephospho-CoA (dPCoA) and pyrophosphate. The protein is Phosphopantetheine adenylyltransferase of Prochlorococcus marinus (strain MIT 9211).